A 184-amino-acid chain; its full sequence is UPF0301 protein SPO0296 (184 aa).

The protein belongs to the UPF0301 (AlgH) family.

The chain is UPF0301 protein SPO0296 from Ruegeria pomeroyi (strain ATCC 700808 / DSM 15171 / DSS-3) (Silicibacter pomeroyi).